A 211-amino-acid chain; its full sequence is MNTIKILIGLLGIFLFSLSGIVSAQSDATTQLSQLLSNFRTYQAKFNQITFDGQDRVIQQSHGRVMIMRPGRFRWETDSPTKQIIITNGKTLWVYDVDLSQATQQPLAQKTNINPASLLSGSVKDLKQKFTITISPTSDAATFQLVPRLGKSLNFNWIRLKFSKKQLTEMTVLNNLDERSIFQFSQIKVNAPLSSTLFEFKPSRGIDVVKQ.

The signal sequence occupies residues 1 to 24 (MNTIKILIGLLGIFLFSLSGIVSA).

It belongs to the LolA family. In terms of assembly, monomer.

The protein resides in the periplasm. Functionally, participates in the translocation of lipoproteins from the inner membrane to the outer membrane. Only forms a complex with a lipoprotein if the residue after the N-terminal Cys is not an aspartate (The Asp acts as a targeting signal to indicate that the lipoprotein should stay in the inner membrane). The protein is Outer-membrane lipoprotein carrier protein of Coxiella burnetii (strain CbuK_Q154) (Coxiella burnetii (strain Q154)).